A 161-amino-acid chain; its full sequence is Arachidonate 5-lipoxygenase-activating protein (161 aa).

The Lumenal portion of the chain corresponds to 1–8; that stretch reads MDQEAVGN. The helical transmembrane segment at 9–30 threads the bilayer; it reads IVLLAIVTLISVVQNGFFAHKV. Residues 31 to 52 lie on the Cytoplasmic side of the membrane; the sequence is EHESKTHNGRSFQRTGTLAFER. Residues 53–77 form a helical membrane-spanning segment; that stretch reads VYTANQNCVDAYPTFLVMLWSAGLL. Over 78-80 the chain is Lumenal; the sequence is CSQ. A helical transmembrane segment spans residues 81–102; that stretch reads VPAAFAGLMYLFVRQKYFVGYL. Residues 103 to 107 lie on the Cytoplasmic side of the membrane; sequence GERTQ. Residues 108-115 lie within the membrane without spanning it; it reads STPGYIFG. Residues 116 to 128 form a helical membrane-spanning segment; that stretch reads KRIILFLFAMSLA. Residues 129–161 lie on the Lumenal side of the membrane; the sequence is GILNYFFIALFGSDFENYIKTVTTTISPLLLIP.

It belongs to the MAPEG family. In terms of assembly, homotrimer. Interacts with LTC4S and ALOX5.

It is found in the nucleus membrane. The protein resides in the endoplasmic reticulum membrane. In terms of biological role, required for leukotriene biosynthesis by ALOX5 (5-lipoxygenase). Anchors ALOX5 to the membrane. Binds arachidonic acid, and could play an essential role in the transfer of arachidonic acid to ALOX5. Binds to MK-886, a compound that blocks the biosynthesis of leukotrienes. The chain is Arachidonate 5-lipoxygenase-activating protein (ALOX5AP) from Bos taurus (Bovine).